The chain runs to 194 residues: Peptidyl-tRNA hydrolase (194 aa).

Histidine 17 provides a ligand contact to tRNA. Catalysis depends on histidine 22, which acts as the Proton acceptor. Phenylalanine 68, asparagine 70, and asparagine 116 together coordinate tRNA.

It belongs to the PTH family. In terms of assembly, monomer.

It is found in the cytoplasm. The catalysed reaction is an N-acyl-L-alpha-aminoacyl-tRNA + H2O = an N-acyl-L-amino acid + a tRNA + H(+). Its function is as follows. Hydrolyzes ribosome-free peptidyl-tRNAs (with 1 or more amino acids incorporated), which drop off the ribosome during protein synthesis, or as a result of ribosome stalling. Catalyzes the release of premature peptidyl moieties from peptidyl-tRNA molecules trapped in stalled 50S ribosomal subunits, and thus maintains levels of free tRNAs and 50S ribosomes. This chain is Peptidyl-tRNA hydrolase, found in Xanthomonas oryzae pv. oryzae (strain MAFF 311018).